The following is a 57-amino-acid chain: Small ribosomal subunit protein bS21B (57 aa).

Residues 37–57 (RYEKPSARRKRKAEAARKRRR) are disordered. A compositionally biased stretch (basic residues) spans 43-57 (ARRKRKAEAARKRRR).

This sequence belongs to the bacterial ribosomal protein bS21 family.

This is Small ribosomal subunit protein bS21B from Gloeobacter violaceus (strain ATCC 29082 / PCC 7421).